A 148-amino-acid polypeptide reads, in one-letter code: Large ribosomal subunit protein bL9 (148 aa).

This sequence belongs to the bacterial ribosomal protein bL9 family.

Its function is as follows. Binds to the 23S rRNA. This Listeria innocua serovar 6a (strain ATCC BAA-680 / CLIP 11262) protein is Large ribosomal subunit protein bL9.